The chain runs to 642 residues: Influenza virus NS1A-binding protein (642 aa).

Residues 1–131 (MIPNGYLMFE…GDYLLSRMDV (131 aa)) enclose the BTB domain. A BACK domain is found at 132–350 (TSCISYRNFA…MQQDELIEKP (219 aa)). The segment at 164-368 (ISEEEEFLKL…SGLGTAEMNG (205 aa)) is sufficient for AHR interaction and signaling. Phosphoserine occurs at positions 246, 277, 322, 336, and 338. Residues 257-281 (KPPRENGHKQISSSSTGCLSSPNAT) are disordered. A compositionally biased stretch (polar residues) spans 265-281 (KQISSSSTGCLSSPNAT). Kelch repeat units follow at residues 384 to 421 (TVEC…YVVG), 432 to 469 (CGEM…YIVG), 481 to 518 (NCDV…YIIG), 527 to 565 (NTVE…FVCG), 575 to 612 (CVEM…YAVG), and 622 to 642 (TVEV…IFQF).

It belongs to the BTB-kelch protein family. As to quaternary structure, homodimer; through the BTB domain. Interacts with AHR/Aryl hydrocarbon receptor. Interacts (via BACK domain) with pre-mRNA-binding protein HNRNPK; the interaction is direct. Interacts (via BACK domain) with splicing factor PTBP1; the interaction is direct. Interacts (via Kelch repeats) with RNA polymerase POLR2A (via C-terminal domain). Interacts (via BACK domain) with splicing factor SNRPA; the interaction is indirect. Interacts (via Kelch repeats) with splicing factor SART1. Interacts (via BACK domain) with ALYREF; the interaction is indirect and likely plays a role in mRNA nuclear export. Interacts (via Kelch repeats) with KLHL20 (via Kelch repeats); this interaction blocks the assembly of Cul3-KLHL20 complex. In terms of assembly, (Microbial infection) Interacts (via BACK domain) with influenza A virus non-structural protein 1 (NS1); the interaction is direct and bridges the interaction between NS1 and HNRNPK.

It is found in the cytoplasm. The protein resides in the cytoskeleton. The protein localises to the nucleus. It localises to the nucleoplasm. In terms of biological role, involved in many cell functions, including pre-mRNA splicing, the aryl hydrocarbon receptor (AHR) pathway, F-actin organization and protein ubiquitination. Plays a role in the dynamic organization of the actin skeleton as a stabilizer of actin filaments by association with F-actin through Kelch repeats. Protects cells from cell death induced by actin destabilization. Functions as modifier of the AHR/Aryl hydrocarbon receptor pathway increasing the concentration of AHR available to activate transcription. In addition, functions as a negative regulator of BCR(KLHL20) E3 ubiquitin ligase complex to prevent ubiquitin-mediated proteolysis of PML and DAPK1, two tumor suppressors. Inhibits pre-mRNA splicing (in vitro). May play a role in mRNA nuclear export. Functionally, (Microbial infection) Involved in the alternative splicing of influenza A virus M1 mRNA through interaction with HNRNPK, thereby facilitating the generation of viral M2 protein. The BTB and Kelch domains are required for splicing activity. Promotes export of viral M mRNA and RNP via its interaction with mRNA export factor ALYREF. The polypeptide is Influenza virus NS1A-binding protein (Homo sapiens (Human)).